A 512-amino-acid polypeptide reads, in one-letter code: 2-isopropylmalate synthase (512 aa).

One can recognise a Pyruvate carboxyltransferase domain in the interval 5–268 (LIIFDTTLRD…ELGIDTQHIV (264 aa)). Asp14, His202, His204, and Asn239 together coordinate Mn(2+). Residues 394-512 (GFVSLSQRSE…SKAERVAAQG (119 aa)) are regulatory domain.

The protein belongs to the alpha-IPM synthase/homocitrate synthase family. LeuA type 1 subfamily. Homodimer. The cofactor is Mn(2+).

The protein localises to the cytoplasm. It catalyses the reaction 3-methyl-2-oxobutanoate + acetyl-CoA + H2O = (2S)-2-isopropylmalate + CoA + H(+). It participates in amino-acid biosynthesis; L-leucine biosynthesis; L-leucine from 3-methyl-2-oxobutanoate: step 1/4. Catalyzes the condensation of the acetyl group of acetyl-CoA with 3-methyl-2-oxobutanoate (2-ketoisovalerate) to form 3-carboxy-3-hydroxy-4-methylpentanoate (2-isopropylmalate). This chain is 2-isopropylmalate synthase, found in Paracidovorax citrulli (strain AAC00-1) (Acidovorax citrulli).